The chain runs to 290 residues: Transcription factor HES-1 (290 aa).

Positions 1–47 are disordered; it reads MPADTGMEKPTASPIAGAPASASHTPDKPRSASEHRKSSKPIMEKRR. The segment covering 10–23 has biased composition (low complexity); that stretch reads PTASPIAGAPASAS. Residues 25 to 36 show a composition bias toward basic and acidic residues; that stretch reads TPDKPRSASEHR. The 58-residue stretch at 35-92 folds into the bHLH domain; the sequence is HRKSSKPIMEKRRRARINESLGQLKMLILDALKKDSSRHSKLEKADILEMTVKHLRNL. The Orange domain maps to 111-144; the sequence is YRAGFNECMNEVTRFLSTCEGVNADVRARLLGHL. The WRPW motif signature appears at 287 to 290; it reads WRPW.

In terms of assembly, transcription repression requires formation of a complex with a corepressor protein of the Groucho/TLE family.

The protein resides in the nucleus. Transcriptional repressor of genes that require a bHLH protein for their transcription. May act as a negative regulator of myogenesis by inhibiting the functions of MYOD1 and ASH1. The polypeptide is Transcription factor HES-1 (HES1) (Gallus gallus (Chicken)).